The chain runs to 267 residues: GTP cyclohydrolase FolE2 2 (267 aa).

The protein belongs to the GTP cyclohydrolase IV family.

It carries out the reaction GTP + H2O = 7,8-dihydroneopterin 3'-triphosphate + formate + H(+). Its pathway is cofactor biosynthesis; 7,8-dihydroneopterin triphosphate biosynthesis; 7,8-dihydroneopterin triphosphate from GTP: step 1/1. Functionally, converts GTP to 7,8-dihydroneopterin triphosphate. This Cupriavidus metallidurans (strain ATCC 43123 / DSM 2839 / NBRC 102507 / CH34) (Ralstonia metallidurans) protein is GTP cyclohydrolase FolE2 2.